The sequence spans 737 residues: Cellulose synthase-like protein E1 (737 aa).

The next 2 helical transmembrane spans lie at 26–45 (AVYR…VLYY) and 58–78 (AAWL…VIAQ). Active-site residues include Asp-146 and Asp-451. The next 5 helical transmembrane spans lie at 528-548 (LWAA…LGLV), 551-571 (TPLF…VFCV), 654-674 (VIIA…LSQI), 683-703 (WNVF…NMPI), and 716-736 (IPTA…LVPI).

The protein belongs to the glycosyltransferase 2 family. Plant cellulose synthase-like E subfamily.

It is found in the golgi apparatus membrane. Thought to be a Golgi-localized beta-glycan synthase that polymerize the backbones of noncellulosic polysaccharides (hemicelluloses) of plant cell wall. The polypeptide is Cellulose synthase-like protein E1 (CSLE1) (Oryza sativa subsp. japonica (Rice)).